Here is a 231-residue protein sequence, read N- to C-terminus: Eukaryotic translation initiation factor 4E allele A (231 aa).

Positions 1-20 are enriched in basic and acidic residues; sequence MAAAEMERTTSFDAAEKLKA. The interval 1-36 is disordered; it reads MAAAEMERTTSFDAAEKLKAADAGGGEVDDELEEGE. The span at 27-36 shows a compositional bias: acidic residues; it reads EVDDELEEGE. EIF4G-binding stretches follow at residues 56–59 and 66–102; these read HPLE and FDSP…NNIH. MRNA is bound by residues 74–79, Lys106, and 124–125; these read RQTAWG and WE. An intrachain disulfide couples Cys129 to Cys167. The EIF4G-binding stretch occupies residues 150 to 159; sequence YTLLAMIGHQ. Residues 174-179 and 219-223 contribute to the mRNA site; these read RSKGEK and KRLDR.

This sequence belongs to the eukaryotic initiation factor 4E family. As to quaternary structure, EIF4F is a multi-subunit complex, the composition of which varies with external and internal environmental conditions. It is composed of at least EIF4A, EIF4E and EIF4G. EIF4E is also known to interact with other partners. In higher plants two isoforms of EIF4F have been identified, named isoform EIF4F and isoform EIF(iso)4F. Isoform EIF4F has subunits p220 and p26, whereas isoform EIF(iso)4F has subunits p82 and p28. (Microbial infection) Interacts with viral genome-linked protein (VPg); this interaction is possible in susceptible hosts but impaired in resistant plants. Post-translationally, according to the redox status, the Cys-129-Cys-167 disulfide bridge may have a role in regulating protein function by affecting its ability to bind capped mRNA.

Its subcellular location is the nucleus. The protein localises to the cytoplasm. In terms of biological role, component of the protein complex eIF4F, which is involved in the recognition of the mRNA cap, ATP-dependent unwinding of 5'-terminal secondary structure and recruitment of mRNA to the ribosome. Recognizes and binds the 7-methylguanosine-containing mRNA cap during an early step in the initiation of protein synthesis and facilitates ribosome binding by inducing the unwinding of the mRNAs secondary structures. Key component of recessive resistance to potyviruses. Its function is as follows. (Microbial infection) Susceptibility host factor required for viral infection (e.g. Potato virus Y (PVY)) by recruiting viral RNAs to the host ribosomal complex via an interaction with viral genome-linked protein (VPg). This chain is Eukaryotic translation initiation factor 4E allele A, found in Solanum tuberosum (Potato).